A 488-amino-acid chain; its full sequence is MAGNALANYVQVYVMLPLDVITVDNTFEKEDETRAQLKKLTEAGADGVMIDVWWGLVEGKEPGVYDWSAYRQVFKLVQEAGLKLQAIMSCHQCGGNVGDVVNIPIPQWVRDVGKSNPDIFYTNRSGLTNIEYLTLGVDDQPLFHGRTAIQLYADYMKSFRENMADFLDAGVVVDIEVGLGPAGEMRYPSYPQSQGWVFPGVGEFICYDKYLQADFKAAAEEAGHPEWDLLDDAGTYNDTPEKTQFFADNGTYQTDKGKFFLTWYSNKLIKHGDKILDEANKVFLGCKVQLAIKVSGIHWWYNVPNHAAELTAGYYNLDDRDGYRTIAHMLTRHRASMNFTCAEMRDSEQSSEAKSAPEELVQQVLSAGWREGLNLACENALNRYDATAYNTILRNARPQGINKNGPPEHKLHGFTYLRVSDELFQEQNYTTFKTFVRRMHANLDYNPNVDPVAPLERSKAEIPIEEILEVAQPKLEPFPFDKDTDLPV.

Positions 51, 91, and 99 each coordinate substrate. The Proton donor role is filled by E184. 3 residues coordinate substrate: K293, H298, and T340. The active-site Proton acceptor is E378. Residues 379–380 (NA) and R418 each bind substrate.

This sequence belongs to the glycosyl hydrolase 14 family.

It carries out the reaction Hydrolysis of (1-&gt;4)-alpha-D-glucosidic linkages in polysaccharides so as to remove successive maltose units from the non-reducing ends of the chains.. The polypeptide is Beta-amylase (BMY1) (Zea mays (Maize)).